We begin with the raw amino-acid sequence, 196 residues long: MYDYIKGILTKITAKYIVVETQGVGYILQVANPYAYSGQVQQEVTVYTHQVIREDAHLLYGFATENEKSVFLSLISVSGIGPTTALAIIAVDDNDGLVRAIEQKNITYLTKFPKIGKKTAQQMILDLEGKFVMSEEAGPVQQVAPSSENIALEEAMEAMEALGYRPAELKKIKKFFEGTNDTAENYIKSALKMLMK.

A domain I region spans residues 1-63 (MYDYIKGILT…EDAHLLYGFA (63 aa)). The tract at residues 64-142 (TENEKSVFLS…MSEEAGPVQQ (79 aa)) is domain II. Residues 142–146 (QVAPS) are flexible linker. The segment at 147–196 (SENIALEEAMEAMEALGYRPAELKKIKKFFEGTNDTAENYIKSALKMLMK) is domain III.

The protein belongs to the RuvA family. In terms of assembly, homotetramer. Forms an RuvA(8)-RuvB(12)-Holliday junction (HJ) complex. HJ DNA is sandwiched between 2 RuvA tetramers; dsDNA enters through RuvA and exits via RuvB. An RuvB hexamer assembles on each DNA strand where it exits the tetramer. Each RuvB hexamer is contacted by two RuvA subunits (via domain III) on 2 adjacent RuvB subunits; this complex drives branch migration. In the full resolvosome a probable DNA-RuvA(4)-RuvB(12)-RuvC(2) complex forms which resolves the HJ.

The protein resides in the cytoplasm. Functionally, the RuvA-RuvB-RuvC complex processes Holliday junction (HJ) DNA during genetic recombination and DNA repair, while the RuvA-RuvB complex plays an important role in the rescue of blocked DNA replication forks via replication fork reversal (RFR). RuvA specifically binds to HJ cruciform DNA, conferring on it an open structure. The RuvB hexamer acts as an ATP-dependent pump, pulling dsDNA into and through the RuvAB complex. HJ branch migration allows RuvC to scan DNA until it finds its consensus sequence, where it cleaves and resolves the cruciform DNA. The polypeptide is Holliday junction branch migration complex subunit RuvA (Streptococcus suis (strain 98HAH33)).